A 121-amino-acid polypeptide reads, in one-letter code: MSITKDQILEAVAAMSVMDVVELISAMEEKFGVSAAAAVAVAAGPAEVAEEKTEFDVVLKAIGANKVAVIKAVRSATGLGLKEAKDLVESAPAVMKEGVSKDDAESLKKSLEEAGAEVEVK.

It belongs to the bacterial ribosomal protein bL12 family. Homodimer. Part of the ribosomal stalk of the 50S ribosomal subunit. Forms a multimeric L10(L12)X complex, where L10 forms an elongated spine to which 2 to 4 L12 dimers bind in a sequential fashion. Binds GTP-bound translation factors.

Its function is as follows. Forms part of the ribosomal stalk which helps the ribosome interact with GTP-bound translation factors. Is thus essential for accurate translation. In Pectobacterium atrosepticum (strain SCRI 1043 / ATCC BAA-672) (Erwinia carotovora subsp. atroseptica), this protein is Large ribosomal subunit protein bL12.